Reading from the N-terminus, the 341-residue chain is Transmembrane protein 120A-A (341 aa).

Residues Met-1 to Glu-131 lie on the Cytoplasmic side of the membrane. Lys-129 provides a ligand contact to CoA. A helical transmembrane segment spans residues Tyr-132–Arg-151. Residues Phe-152 to Arg-157 lie on the Extracellular side of the membrane. Residues Val-158–Ile-176 form a helical membrane-spanning segment. Residues Arg-177 to Lys-189 are Cytoplasmic-facing. CoA contacts are provided by Ser-186 and Lys-187. A helical transmembrane segment spans residues Gly-190–Thr-208. The Extracellular segment spans residues Trp-209–Met-217. Residues Phe-218 to Tyr-239 traverse the membrane as a helical segment. CoA contacts are provided by Gln-236, Tyr-239, Gln-240, and His-282. Residues Gln-240–Arg-269 are Cytoplasmic-facing. Residues Gly-270–Phe-293 traverse the membrane as a helical segment. Residues Gln-294 to Glu-303 lie on the Extracellular side of the membrane. A helical transmembrane segment spans residues Trp-304–Tyr-329. Residues His-330–Leu-341 are Cytoplasmic-facing. Lys-331 serves as a coordination point for CoA.

The protein belongs to the TMEM120 family. As to quaternary structure, homodimer.

The protein resides in the cell membrane. Its subcellular location is the nucleus inner membrane. It localises to the endoplasmic reticulum. Its function is as follows. Multifunctional protein involved in mechanosensation, and plays an essential role in lipid metabolism. May function as a potential ion channel involved in sensing mechanical stimuli. TMEM120A is structurally similar to a lipid-modifying enzyme, ELOVL7, and contains a bound coenzyme A molecule, which suggests it might function as an enzyme in lipid metabolism. This chain is Transmembrane protein 120A-A (tmem120aa), found in Danio rerio (Zebrafish).